Here is a 1124-residue protein sequence, read N- to C-terminus: Transient-receptor-potential-like protein (1124 aa).

The disordered stretch occupies residues 1–24 (MGRKKKLPTGVSSGVSHASSAPKS). The Cytoplasmic segment spans residues 1–340 (MGRKKKLPTG…GFRRKSIVDK (340 aa)). Positions 10 to 21 (GVSSGVSHASSA) are enriched in low complexity. ANK repeat units lie at residues 40 to 69 (LEEKKFLLAVERGDMPNVRRILQKALRHQH), 78 to 107 (LGRRALTLAIDNENLEMVELLVVMGVETKD), and 152 to 181 (PDITPLMLAAHKNNFEILRILLDRGAAVPV). The helical transmembrane segment at 341–361 (VICIAQVAVLFPLYCLIYMCA) threads the bilayer. Over 362–373 (PNCRTGQLMRKP) the chain is Extracellular. A helical membrane pass occupies residues 374–394 (FMKFLIHASSYLFFLFILILV). Over 395-431 (SQRADDDFVRIFGTTRMKKELAEQELRQRGQTPSKLE) the chain is Cytoplasmic. Residues 432–452 (LIVVMYVIGFVWEEVQEIFAV) form a helical membrane-spanning segment. Topologically, residues 453–512 (GMKSYLRNMWNFIDFLRNSLYVSVMCLRAFAYIQQATEIARDPQMAYIPREKWHDFDPQL) are extracellular. The helical transmembrane segment at 513–533 (IAEGLFAAANVFSALKLVHLF) threads the bilayer. The Cytoplasmic portion of the chain corresponds to 534 to 548 (SINPHLGPLQISLGR). Residues 549-569 (MVIDIVKFFFIYTLVLFAFAC) form a helical membrane-spanning segment. Residues 570–645 (GLNQLLWYFA…GIKSYTRFWG (76 aa)) are Extracellular-facing. The chain crosses the membrane as a helical span at residues 646 to 666 (LLMFGSYSVINVIVLLNLLIA). Residues 667-1124 (MMSNSYAMID…TSPQRPKHRN (458 aa)) are Cytoplasmic-facing. 2 calmodulin-binding regions span residues 710–728 (SVKWVIRIFRKSSKTIDRQ) and 853–895 (IPSK…SQIG). Disordered stretches follow at residues 978–1013 (RAMAANNTRSLTAPELKISRKSSPAPTPTPTPGVSH) and 1031–1124 (LIAN…KHRN). A compositionally biased stretch (low complexity) spans 1035–1063 (SAPSAPTAPPKKSAPTAPTPTYKPTTHAP). Basic and acidic residues-rich tracts occupy residues 1069–1081 (GNRENTRASDGVR) and 1090–1106 (HVVDLDEKGGHLGRDNV). Polar residues predominate over residues 1107–1118 (SDISSIASTSPQ).

This sequence belongs to the transient receptor (TC 1.A.4) family. STrpC subfamily. In terms of assembly, forms heteromultimers with Trpgamma and, to a lower extent, with trp. Interacts with Fkbp59 in vivo and is found in the inaD signaling complex. In terms of tissue distribution, expressed predominantly in the rhabdomeres of photoreceptor cells.

Its subcellular location is the membrane. The protein localises to the cell projection. It localises to the rhabdomere membrane. In terms of biological role, a light-sensitive calcium channel that is required for inositide-mediated Ca(2+) entry in the retina during phospholipase C (PLC)-mediated phototransduction. Required for vision in the dark and in dim light. Binds calmodulin. Trp and trpl act together in the light response, although it is unclear whether as heteromultimers or distinct units. Also forms a functional cation channel with Trpgamma. Activated by fatty acids, metabolic stress, inositols and GTP-binding proteins. The polypeptide is Transient-receptor-potential-like protein (trpl) (Drosophila melanogaster (Fruit fly)).